The primary structure comprises 251 residues: Octanoyltransferase (251 aa).

The 186-residue stretch at 56–241 (ADTGDEIWVV…NLDGASAAAD (186 aa)) folds into the BPL/LPL catalytic domain. Substrate contacts are provided by residues 96 to 103 (RGGQITYH), 168 to 170 (ALG), and 181 to 183 (GLS). Cys-199 serves as the catalytic Acyl-thioester intermediate.

It belongs to the LipB family.

It localises to the cytoplasm. The catalysed reaction is octanoyl-[ACP] + L-lysyl-[protein] = N(6)-octanoyl-L-lysyl-[protein] + holo-[ACP] + H(+). It functions in the pathway protein modification; protein lipoylation via endogenous pathway; protein N(6)-(lipoyl)lysine from octanoyl-[acyl-carrier-protein]: step 1/2. Catalyzes the transfer of endogenously produced octanoic acid from octanoyl-acyl-carrier-protein onto the lipoyl domains of lipoate-dependent enzymes. Lipoyl-ACP can also act as a substrate although octanoyl-ACP is likely to be the physiological substrate. In Burkholderia orbicola (strain AU 1054), this protein is Octanoyltransferase.